The primary structure comprises 362 residues: Phenylalanine--tRNA ligase alpha subunit (362 aa).

Glu263 is a Mg(2+) binding site.

Belongs to the class-II aminoacyl-tRNA synthetase family. Phe-tRNA synthetase alpha subunit type 1 subfamily. Tetramer of two alpha and two beta subunits. The cofactor is Mg(2+).

It is found in the cytoplasm. The catalysed reaction is tRNA(Phe) + L-phenylalanine + ATP = L-phenylalanyl-tRNA(Phe) + AMP + diphosphate + H(+). This is Phenylalanine--tRNA ligase alpha subunit from Caulobacter sp. (strain K31).